The primary structure comprises 260 residues: MALRRPMVAGNWKMNGSAQLAQELFKKFATKLQNDSAEVVLCPPTIYLESVRQQLDANKEALNGCLVRMGAQNLSQHDFGAYTGEVSGQMLKDSGCRYVIIGHSERRRMYGETSDIVAEKFAAAQKHGLTPILCVGESGPAREARRTFEVIAEELDVVIEKNGTMAFDNAIIAYEPLWAVGTGKSATPEQAQEVHAFIRKRLSEVSPFIGENIRILYGGSVTPSNAADLFAQPDVDGGLIGGVSLNSTEFLSLCSIAMSA.

Residue 11 to 13 (NWK) coordinates substrate. The active-site Electrophile is the histidine 103. Glutamate 175 acts as the Proton acceptor in catalysis. Substrate-binding positions include glycine 181, serine 220, and 241–242 (GG).

This sequence belongs to the triosephosphate isomerase family. In terms of assembly, homodimer.

Its subcellular location is the cytoplasm. The catalysed reaction is D-glyceraldehyde 3-phosphate = dihydroxyacetone phosphate. It participates in carbohydrate biosynthesis; gluconeogenesis. Its pathway is carbohydrate degradation; glycolysis; D-glyceraldehyde 3-phosphate from glycerone phosphate: step 1/1. In terms of biological role, involved in the gluconeogenesis. Catalyzes stereospecifically the conversion of dihydroxyacetone phosphate (DHAP) to D-glyceraldehyde-3-phosphate (G3P). In Shewanella woodyi (strain ATCC 51908 / MS32), this protein is Triosephosphate isomerase.